The following is a 61-amino-acid chain: Small ribosomal subunit protein uS14 (61 aa).

Zn(2+) is bound by residues Cys24, Cys27, Cys40, and Cys43.

Belongs to the universal ribosomal protein uS14 family. Zinc-binding uS14 subfamily. In terms of assembly, part of the 30S ribosomal subunit. Contacts proteins S3 and S10. It depends on Zn(2+) as a cofactor.

Functionally, binds 16S rRNA, required for the assembly of 30S particles and may also be responsible for determining the conformation of the 16S rRNA at the A site. The chain is Small ribosomal subunit protein uS14 from Leptospira borgpetersenii serovar Hardjo-bovis (strain JB197).